We begin with the raw amino-acid sequence, 606 residues long: Leucine-rich repeat and immunoglobulin-like domain-containing nogo receptor-interacting protein 2 (606 aa).

A signal peptide spans 1 to 27 (MLHTAIPCWQPFLGLAVVLLLMGSTIG). Residues 28 to 57 (CPARCECSAQNKSVSCHRRRLLAIPEGIPI) enclose the LRRNT domain. At 28–545 (CPARCECSAQ…LDLKTILVST (518 aa)) the chain is on the extracellular side. Asn-38 is a glycosylation site (N-linked (GlcNAc...) asparagine). LRR repeat units follow at residues 58-79 (ETKI…EFIS), 82-103 (LLEE…AFNN), 106-127 (NLRS…VFTG), 130-151 (NLTK…MFQD), 154-175 (NLKS…AFSG), 178-199 (SLEQ…ALSH), 202-223 (SLIA…AFKR), 226-247 (HLKN…NSLY), 250-271 (NLTS…AFKH), 274-295 (YLTH…MFSD), 298-319 (RLQE…SFQG), and 322-343 (FLRV…VFSS). The N-linked (GlcNAc...) asparagine glycan is linked to Asn-130. Residue Asn-188 is glycosylated (N-linked (GlcNAc...) asparagine). N-linked (GlcNAc...) asparagine glycans are attached at residues Asn-250, Asn-260, and Asn-279. Asn-327 carries an N-linked (GlcNAc...) asparagine glycan. In terms of domain architecture, LRRCT spans 355 to 409 (NPLACDCRLLWLLQRQPNLQFGGQQPMCAGPDTIRERSFKDFHSTALSFYFTCKK). Cys-432 and Cys-483 are disulfide-bonded. 3 N-linked (GlcNAc...) asparagine glycosylation sites follow: Asn-491, Asn-522, and Asn-527. A helical membrane pass occupies residues 546–566 (AMGCFTFLGVVLFCFLLLFVW). Residues 567–606 (SRGKGKHKNSIDLEYVPRKNNGAVVEGEVAGPRRFNMKMI) are Cytoplasmic-facing.

The protein resides in the membrane. This chain is Leucine-rich repeat and immunoglobulin-like domain-containing nogo receptor-interacting protein 2 (Lingo2), found in Mus musculus (Mouse).